The primary structure comprises 324 residues: tRNA(Ile)-lysidine synthase (324 aa).

33 to 38 (SGGPDS) contacts ATP.

The protein belongs to the tRNA(Ile)-lysidine synthase family.

The protein resides in the cytoplasm. It catalyses the reaction cytidine(34) in tRNA(Ile2) + L-lysine + ATP = lysidine(34) in tRNA(Ile2) + AMP + diphosphate + H(+). Functionally, ligates lysine onto the cytidine present at position 34 of the AUA codon-specific tRNA(Ile) that contains the anticodon CAU, in an ATP-dependent manner. Cytidine is converted to lysidine, thus changing the amino acid specificity of the tRNA from methionine to isoleucine. In Thermobifida fusca (strain YX), this protein is tRNA(Ile)-lysidine synthase.